Here is a 233-residue protein sequence, read N- to C-terminus: Phosphoribosylformylglycinamidine synthase subunit PurQ (233 aa).

The Glutamine amidotransferase type-1 domain maps to 3–233 (SAILVFPGIN…GLVEHLAKAA (231 aa)). Cysteine 87 acts as the Nucleophile in catalysis. Catalysis depends on residues histidine 204 and glutamate 206.

As to quaternary structure, part of the FGAM synthase complex composed of 1 PurL, 1 PurQ and 2 PurS subunits.

It localises to the cytoplasm. It carries out the reaction N(2)-formyl-N(1)-(5-phospho-beta-D-ribosyl)glycinamide + L-glutamine + ATP + H2O = 2-formamido-N(1)-(5-O-phospho-beta-D-ribosyl)acetamidine + L-glutamate + ADP + phosphate + H(+). The enzyme catalyses L-glutamine + H2O = L-glutamate + NH4(+). The protein operates within purine metabolism; IMP biosynthesis via de novo pathway; 5-amino-1-(5-phospho-D-ribosyl)imidazole from N(2)-formyl-N(1)-(5-phospho-D-ribosyl)glycinamide: step 1/2. Part of the phosphoribosylformylglycinamidine synthase complex involved in the purines biosynthetic pathway. Catalyzes the ATP-dependent conversion of formylglycinamide ribonucleotide (FGAR) and glutamine to yield formylglycinamidine ribonucleotide (FGAM) and glutamate. The FGAM synthase complex is composed of three subunits. PurQ produces an ammonia molecule by converting glutamine to glutamate. PurL transfers the ammonia molecule to FGAR to form FGAM in an ATP-dependent manner. PurS interacts with PurQ and PurL and is thought to assist in the transfer of the ammonia molecule from PurQ to PurL. This chain is Phosphoribosylformylglycinamidine synthase subunit PurQ, found in Rhodopseudomonas palustris (strain BisB18).